The primary structure comprises 439 residues: Tol-Pal system protein TolB (439 aa).

The N-terminal stretch at 1–22 (MTKFPRWLAMLVGLLFPLSALT) is a signal peptide.

This sequence belongs to the TolB family. In terms of assembly, the Tol-Pal system is composed of five core proteins: the inner membrane proteins TolA, TolQ and TolR, the periplasmic protein TolB and the outer membrane protein Pal. They form a network linking the inner and outer membranes and the peptidoglycan layer.

It localises to the periplasm. Its function is as follows. Part of the Tol-Pal system, which plays a role in outer membrane invagination during cell division and is important for maintaining outer membrane integrity. This Xylella fastidiosa (strain Temecula1 / ATCC 700964) protein is Tol-Pal system protein TolB.